A 366-amino-acid polypeptide reads, in one-letter code: Autoinducer 2-binding periplasmic protein LuxP (366 aa).

Positions 1–13 (MKKILLTCLLASA) are cleaved as a signal peptide.

The protein belongs to the bacterial solute-binding protein 2 family.

It localises to the periplasm. In terms of biological role, binds to an autoinducer molecule. This complex then interacts with the LuxQ sensor protein. The chain is Autoinducer 2-binding periplasmic protein LuxP (luxP) from Vibrio vulnificus (strain YJ016).